Consider the following 701-residue polypeptide: Elongation factor G (701 aa).

One can recognise a tr-type G domain in the interval 8–290 (ERYRNIGISA…AVVDYLPAPT (283 aa)). GTP-binding positions include 17 to 24 (AHIDAGKT), 88 to 92 (DTPGH), and 142 to 145 (NKMD).

This sequence belongs to the TRAFAC class translation factor GTPase superfamily. Classic translation factor GTPase family. EF-G/EF-2 subfamily.

The protein resides in the cytoplasm. Functionally, catalyzes the GTP-dependent ribosomal translocation step during translation elongation. During this step, the ribosome changes from the pre-translocational (PRE) to the post-translocational (POST) state as the newly formed A-site-bound peptidyl-tRNA and P-site-bound deacylated tRNA move to the P and E sites, respectively. Catalyzes the coordinated movement of the two tRNA molecules, the mRNA and conformational changes in the ribosome. The polypeptide is Elongation factor G (Aeromonas salmonicida (strain A449)).